Here is a 439-residue protein sequence, read N- to C-terminus: Serine/threonine-protein kinase 2 (439 aa).

Residues 87 to 439 (NDDFYHISTG…IFSDWINGGN (353 aa)) form the Protein kinase domain. Residues 93-101 (ISTGGYGIV) and lysine 117 contribute to the ATP site. Aspartate 307 (proton acceptor) is an active-site residue.

It belongs to the protein kinase superfamily. Ser/Thr protein kinase family. Poxviruses subfamily. Post-translationally, phosphorylated in vivo. Autophosphorylated in vitro.

The protein resides in the host endoplasmic reticulum. It localises to the host endoplasmic reticulum-Golgi intermediate compartment. The catalysed reaction is L-seryl-[protein] + ATP = O-phospho-L-seryl-[protein] + ADP + H(+). The enzyme catalyses L-threonyl-[protein] + ATP = O-phospho-L-threonyl-[protein] + ADP + H(+). Essential serine-protein kinase involved in the early stage of virion morphogenesis. The protein is Serine/threonine-protein kinase 2 (OPG054) of Vaccinia virus (strain Copenhagen) (VACV).